The following is a 287-amino-acid chain: MTQLSAAQKPSDSSKALYGGKGTRRITIRDITTAKERGEKWPMLTAYDAMTASVFDEAGIPVMLVGDSAGNCHLGYETTVPVTLDEMTMLSAAVVRGTSRALIVGDLPFGSYQEGPVQALRSATRLVKEAGVGAVKLEGGERSHRQIELLVESGIPVMAHIGLTPQSVNAMGYRVQGRGEEAAQQLLRDAKAVQDAGAFAVVLELVPAELAAEVTRVLHIPTVGIGAGPETDAQVLVWTDMLGLTGGKVPKFVKKYADLREVMGNAAKAFAEDVVGGTFPLEEHSVH.

Residues D67 and D106 each coordinate Mg(2+). Residues 67 to 68, D106, and K136 contribute to the 3-methyl-2-oxobutanoate site; that span reads DS. E138 provides a ligand contact to Mg(2+). The Proton acceptor role is filled by E204.

This sequence belongs to the PanB family. Homodecamer; pentamer of dimers. It depends on Mg(2+) as a cofactor.

It is found in the cytoplasm. It carries out the reaction 3-methyl-2-oxobutanoate + (6R)-5,10-methylene-5,6,7,8-tetrahydrofolate + H2O = 2-dehydropantoate + (6S)-5,6,7,8-tetrahydrofolate. It participates in cofactor biosynthesis; (R)-pantothenate biosynthesis; (R)-pantoate from 3-methyl-2-oxobutanoate: step 1/2. Its function is as follows. Catalyzes the reversible reaction in which hydroxymethyl group from 5,10-methylenetetrahydrofolate is transferred onto alpha-ketoisovalerate to form ketopantoate. This Streptomyces avermitilis (strain ATCC 31267 / DSM 46492 / JCM 5070 / NBRC 14893 / NCIMB 12804 / NRRL 8165 / MA-4680) protein is 3-methyl-2-oxobutanoate hydroxymethyltransferase.